The sequence spans 302 residues: Phospho-N-acetylmuramoyl-pentapeptide-transferase (302 aa).

The next 10 membrane-spanning stretches (helical) occupy residues 1 to 21 (MIAA…NLFR), 42 to 62 (GTPT…GVLS), 67 to 87 (VILT…FLSI), 101 to 121 (ALLQ…ETAV), 123 to 143 (FFGI…IVIV), 154 to 174 (GLDG…WFFL), 178 to 198 (GFSE…LIFN), 204 to 224 (IFMG…VSVL), 229 to 249 (FYLI…ILQI), and 279 to 299 (IVAV…EVFG).

Belongs to the glycosyltransferase 4 family. MraY subfamily. Requires Mg(2+) as cofactor.

The protein resides in the cell inner membrane. It carries out the reaction UDP-N-acetyl-alpha-D-muramoyl-L-alanyl-gamma-D-glutamyl-meso-2,6-diaminopimeloyl-D-alanyl-D-alanine + di-trans,octa-cis-undecaprenyl phosphate = di-trans,octa-cis-undecaprenyl diphospho-N-acetyl-alpha-D-muramoyl-L-alanyl-D-glutamyl-meso-2,6-diaminopimeloyl-D-alanyl-D-alanine + UMP. It participates in cell wall biogenesis; peptidoglycan biosynthesis. Functionally, catalyzes the initial step of the lipid cycle reactions in the biosynthesis of the cell wall peptidoglycan: transfers peptidoglycan precursor phospho-MurNAc-pentapeptide from UDP-MurNAc-pentapeptide onto the lipid carrier undecaprenyl phosphate, yielding undecaprenyl-pyrophosphoryl-MurNAc-pentapeptide, known as lipid I. This chain is Phospho-N-acetylmuramoyl-pentapeptide-transferase, found in Thermotoga neapolitana (strain ATCC 49049 / DSM 4359 / NBRC 107923 / NS-E).